Reading from the N-terminus, the 114-residue chain is uncharacterized protein (114 aa).

This is an uncharacterized protein from Methanocaldococcus jannaschii (strain ATCC 43067 / DSM 2661 / JAL-1 / JCM 10045 / NBRC 100440) (Methanococcus jannaschii).